The following is a 357-amino-acid chain: Holliday junction branch migration complex subunit RuvB (357 aa).

The span at 1–10 (MAIQSDSLSS) shows a compositional bias: polar residues. The tract at residues 1 to 30 (MAIQSDSLSSRPDAPRLVAPAPASPNEESI) is disordered. The interval 5 to 195 (SDSLSSRPDA…FGIVSRLEFY (191 aa)) is large ATPase domain (RuvB-L). Residues Leu-34, Arg-35, Gly-76, Lys-79, Thr-80, Thr-81, 142 to 144 (EDF), Arg-185, Tyr-195, and Arg-232 each bind ATP. Thr-80 lines the Mg(2+) pocket. The small ATPAse domain (RuvB-S) stretch occupies residues 196 to 266 (NTDDLAHIVT…AANQALAMLE (71 aa)). Positions 269 to 357 (PQGLDLMDRK…QPSSGDLFGA (89 aa)) are head domain (RuvB-H). DNA contacts are provided by Arg-305, Arg-324, and Arg-329.

This sequence belongs to the RuvB family. In terms of assembly, homohexamer. Forms an RuvA(8)-RuvB(12)-Holliday junction (HJ) complex. HJ DNA is sandwiched between 2 RuvA tetramers; dsDNA enters through RuvA and exits via RuvB. An RuvB hexamer assembles on each DNA strand where it exits the tetramer. Each RuvB hexamer is contacted by two RuvA subunits (via domain III) on 2 adjacent RuvB subunits; this complex drives branch migration. In the full resolvosome a probable DNA-RuvA(4)-RuvB(12)-RuvC(2) complex forms which resolves the HJ.

The protein localises to the cytoplasm. It carries out the reaction ATP + H2O = ADP + phosphate + H(+). In terms of biological role, the RuvA-RuvB-RuvC complex processes Holliday junction (HJ) DNA during genetic recombination and DNA repair, while the RuvA-RuvB complex plays an important role in the rescue of blocked DNA replication forks via replication fork reversal (RFR). RuvA specifically binds to HJ cruciform DNA, conferring on it an open structure. The RuvB hexamer acts as an ATP-dependent pump, pulling dsDNA into and through the RuvAB complex. RuvB forms 2 homohexamers on either side of HJ DNA bound by 1 or 2 RuvA tetramers; 4 subunits per hexamer contact DNA at a time. Coordinated motions by a converter formed by DNA-disengaged RuvB subunits stimulates ATP hydrolysis and nucleotide exchange. Immobilization of the converter enables RuvB to convert the ATP-contained energy into a lever motion, pulling 2 nucleotides of DNA out of the RuvA tetramer per ATP hydrolyzed, thus driving DNA branch migration. The RuvB motors rotate together with the DNA substrate, which together with the progressing nucleotide cycle form the mechanistic basis for DNA recombination by continuous HJ branch migration. Branch migration allows RuvC to scan DNA until it finds its consensus sequence, where it cleaves and resolves cruciform DNA. The polypeptide is Holliday junction branch migration complex subunit RuvB (Bordetella avium (strain 197N)).